We begin with the raw amino-acid sequence, 142 residues long: MKVFVAICVLIGLASADYVVKNRHDMLAYRDECVKELAVPVDLVEKYQKWEYPNDAKTQCYIKCVFTKWGLFDVQSGFNVENIHQQLVGNHADHNEAFHASLAACVDKNEQGSNACEWAYRGATCLLKENLAQIQKSLAPKA.

Residues 1–16 (MKVFVAICVLIGLASA) form the signal peptide. 3 disulfide bridges follow: cysteine 33–cysteine 64, cysteine 60–cysteine 116, and cysteine 105–cysteine 125.

It belongs to the PBP/GOBP family. Expressed in larval chemosensory organ. Specifically expressed exclusively in a subset of chemosensory sensilla on the third antennal segment.

Its subcellular location is the secreted. Present in the aqueous fluid surrounding olfactory sensory dendrites and are thought to aid in the capture and transport of hydrophobic odorants into and through this fluid. In Drosophila melanogaster (Fruit fly), this protein is General odorant-binding protein 99a (Obp99a).